Reading from the N-terminus, the 189-residue chain is 6,7-dimethyl-8-ribityllumazine synthase (189 aa).

5-amino-6-(D-ribitylamino)uracil contacts are provided by residues tryptophan 31, serine 65–glutamate 67, and cysteine 89–isoleucine 91. Position 94 to 95 (glutamate 94 to threonine 95) interacts with (2S)-2-hydroxy-3-oxobutyl phosphate. Residue histidine 97 is the Proton donor of the active site. A 5-amino-6-(D-ribitylamino)uracil-binding site is contributed by phenylalanine 122. Arginine 136 is a binding site for (2S)-2-hydroxy-3-oxobutyl phosphate.

This sequence belongs to the DMRL synthase family.

It carries out the reaction (2S)-2-hydroxy-3-oxobutyl phosphate + 5-amino-6-(D-ribitylamino)uracil = 6,7-dimethyl-8-(1-D-ribityl)lumazine + phosphate + 2 H2O + H(+). It functions in the pathway cofactor biosynthesis; riboflavin biosynthesis; riboflavin from 2-hydroxy-3-oxobutyl phosphate and 5-amino-6-(D-ribitylamino)uracil: step 1/2. Its function is as follows. Catalyzes the formation of 6,7-dimethyl-8-ribityllumazine by condensation of 5-amino-6-(D-ribitylamino)uracil with 3,4-dihydroxy-2-butanone 4-phosphate. This is the penultimate step in the biosynthesis of riboflavin. The polypeptide is 6,7-dimethyl-8-ribityllumazine synthase (Flavobacterium psychrophilum (strain ATCC 49511 / DSM 21280 / CIP 103535 / JIP02/86)).